Reading from the N-terminus, the 179-residue chain is Large ribosomal subunit protein uL5 (179 aa).

Belongs to the universal ribosomal protein uL5 family. In terms of assembly, part of the 50S ribosomal subunit; part of the 5S rRNA/L5/L18/L25 subcomplex. Contacts the 5S rRNA and the P site tRNA. Forms a bridge to the 30S subunit in the 70S ribosome.

Its function is as follows. This is one of the proteins that bind and probably mediate the attachment of the 5S RNA into the large ribosomal subunit, where it forms part of the central protuberance. In the 70S ribosome it contacts protein S13 of the 30S subunit (bridge B1b), connecting the 2 subunits; this bridge is implicated in subunit movement. Contacts the P site tRNA; the 5S rRNA and some of its associated proteins might help stabilize positioning of ribosome-bound tRNAs. The sequence is that of Large ribosomal subunit protein uL5 from Nitrosomonas eutropha (strain DSM 101675 / C91 / Nm57).